A 338-amino-acid chain; its full sequence is Phenylalanine--tRNA ligase alpha subunit (338 aa).

Residue glutamate 253 coordinates Mg(2+).

Belongs to the class-II aminoacyl-tRNA synthetase family. Phe-tRNA synthetase alpha subunit type 1 subfamily. Tetramer of two alpha and two beta subunits. Mg(2+) is required as a cofactor.

It is found in the cytoplasm. It catalyses the reaction tRNA(Phe) + L-phenylalanine + ATP = L-phenylalanyl-tRNA(Phe) + AMP + diphosphate + H(+). This Syntrophotalea carbinolica (strain DSM 2380 / NBRC 103641 / GraBd1) (Pelobacter carbinolicus) protein is Phenylalanine--tRNA ligase alpha subunit.